Here is a 170-residue protein sequence, read N- to C-terminus: CFA/I fimbrial subunit B (170 aa).

Positions 1–23 are cleaved as a signal peptide; sequence MKFKKTIGAMALTTMFVAVSASA.

The protein belongs to the fimbrial CS1 protein family. As to quaternary structure, CFA/I fimbriae are rather rigid, thread-like filaments of 0.5-1 micrometer, with an apparent axial hole, and a diameter of 7 nanometers. A single CFA/I fimbria consists of about 100 identical protein subunits.

Its subcellular location is the fimbrium. In terms of biological role, fimbriae (also called pili), polar filaments radiating from the surface of the bacterium to a length of 0.5-1.5 micrometers and numbering 100-300 per cell, enable bacteria to colonize the epithelium of specific host organs. The sequence is that of CFA/I fimbrial subunit B (cfaB) from Escherichia coli O78:H11 (strain H10407 / ETEC).